We begin with the raw amino-acid sequence, 85 residues long: MSWDVIKHPHVTEKAMNDMDFQNKLQFAVDDRASKGEVADAVEEQYDVTVEQVNTQNTMDGEKKAVVRLSEDDDAQEVASRIGVF.

The protein belongs to the universal ribosomal protein uL23 family. In terms of assembly, part of the 50S ribosomal subunit. Interacts with protein L29 and weakly with protein L39e.

Its function is as follows. Binds to a specific region on the 23S rRNA. Located at the polypeptide exit tunnel on the outside of the subunit. In Haloarcula marismortui (strain ATCC 43049 / DSM 3752 / JCM 8966 / VKM B-1809) (Halobacterium marismortui), this protein is Large ribosomal subunit protein uL23.